Reading from the N-terminus, the 358-residue chain is Peptide chain release factor 1 (358 aa).

Residue glutamine 237 is modified to N5-methylglutamine.

It belongs to the prokaryotic/mitochondrial release factor family. In terms of processing, methylated by PrmC. Methylation increases the termination efficiency of RF1.

Its subcellular location is the cytoplasm. Functionally, peptide chain release factor 1 directs the termination of translation in response to the peptide chain termination codons UAG and UAA. The sequence is that of Peptide chain release factor 1 from Streptomyces griseus subsp. griseus (strain JCM 4626 / CBS 651.72 / NBRC 13350 / KCC S-0626 / ISP 5235).